The sequence spans 291 residues: 4-diphosphocytidyl-2-C-methyl-D-erythritol kinase (291 aa).

Residue Lys-21 is part of the active site. 104 to 114 (PMGGGLGGGSS) is a binding site for ATP. Asp-146 is a catalytic residue.

It belongs to the GHMP kinase family. IspE subfamily.

The enzyme catalyses 4-CDP-2-C-methyl-D-erythritol + ATP = 4-CDP-2-C-methyl-D-erythritol 2-phosphate + ADP + H(+). It participates in isoprenoid biosynthesis; isopentenyl diphosphate biosynthesis via DXP pathway; isopentenyl diphosphate from 1-deoxy-D-xylulose 5-phosphate: step 3/6. In terms of biological role, catalyzes the phosphorylation of the position 2 hydroxy group of 4-diphosphocytidyl-2C-methyl-D-erythritol. This is 4-diphosphocytidyl-2-C-methyl-D-erythritol kinase from Methylococcus capsulatus (strain ATCC 33009 / NCIMB 11132 / Bath).